The chain runs to 746 residues: Stromal interaction molecule 2 (746 aa).

The signal sequence occupies residues 1–14 (MLVLGLLVAGAADG). Residues 15 to 218 (CELVPRHLRG…RPPHNWMKDF (204 aa)) are Extracellular-facing. An EF-hand domain is found at 67–102 (FSLEALQTIHKQMDDDKDGGIEVEESDEFIREDMKY). Ca(2+) contacts are provided by aspartate 80, aspartate 82, aspartate 84, and glutamate 91. N-linked (GlcNAc...) asparagine glycosylation occurs at asparagine 135. The SAM domain maps to 136–204 (WTLEDTLQWL…QLKALDVVLF (69 aa)). The helical transmembrane segment at 219–235 (ILTVSIVIGVGGCWFAY) threads the bilayer. At 236–746 (TQNKTSKEHV…IKSLFKKKSK (511 aa)) the chain is on the cytoplasmic side. Residues 247–394 (KMMKDLESLQ…EKIKKKRSTV (148 aa)) are a coiled coil. The disordered stretch occupies residues 483-562 (DLDEDTPPIV…SLPSPDPDIL (80 aa)). Residue serine 523 is modified to Phosphoserine. The span at 537–549 (HPSHPRHPHHPQH) shows a compositional bias: basic residues. A phosphoserine mark is found at serine 609, serine 621, serine 640, serine 650, serine 661, serine 665, serine 680, and serine 697. Residues 685–746 (SSGIPVPKPR…IKSLFKKKSK (62 aa)) form a disordered region. Positions 723–732 (DLCHNGEKSK) are enriched in basic and acidic residues. Residues 733–746 (KPSKIKSLFKKKSK) show a composition bias toward basic residues.

Oligomer with STIM1. Interacts with ORAI1. In terms of processing, glycosylated. Post-translationally, phosphorylated predominantly on Ser residues. In terms of tissue distribution, expressed in all tissues and tumor cell lines examined.

The protein resides in the endoplasmic reticulum membrane. Functionally, plays a role in mediating store-operated Ca(2+) entry (SOCE), a Ca(2+) influx following depletion of intracellular Ca(2+) stores. Functions as a highly sensitive Ca(2+) sensor in the endoplasmic reticulum which activates both store-operated and store-independent Ca(2+)-influx. Regulates basal cytosolic and endoplasmic reticulum Ca(2+) concentrations. Upon mild variations of the endoplasmic reticulum Ca(2+) concentration, translocates from the endoplasmic reticulum to the plasma membrane where it probably activates the Ca(2+) release-activated Ca(2+) (CRAC) channels ORAI1, ORAI2 and ORAI3. May inhibit STIM1-mediated Ca(2+) influx. In Homo sapiens (Human), this protein is Stromal interaction molecule 2 (STIM2).